We begin with the raw amino-acid sequence, 167 residues long: Small ribosomal subunit protein uS3m (167 aa).

The transit peptide at 1 to 35 (MVALYCGGGLRPLMLSWSRDLPCIWRALHTSAVCF) directs the protein to the mitochondrion.

The protein belongs to the universal ribosomal protein uS3 family. Component of the mitochondrial ribosome small subunit (28S) which comprises a 12S rRNA and about 30 distinct proteins.

Its subcellular location is the mitochondrion. This chain is Small ribosomal subunit protein uS3m (MRPS24), found in Bos taurus (Bovine).